The chain runs to 291 residues: Phosphoribulokinase (291 aa).

Residue 12–20 coordinates ATP; it reads GSSGAGTTS.

This sequence belongs to the phosphoribulokinase family. Homooctamer.

The catalysed reaction is D-ribulose 5-phosphate + ATP = D-ribulose 1,5-bisphosphate + ADP + H(+). Its pathway is carbohydrate biosynthesis; Calvin cycle. The sequence is that of Phosphoribulokinase (cbbP) from Xanthobacter flavus.